A 230-amino-acid chain; its full sequence is 7-cyano-7-deazaguanine synthase (230 aa).

An ATP-binding site is contributed by 8-18 (LSGGMDSAVVT). 4 residues coordinate Zn(2+): cysteine 186, cysteine 196, cysteine 199, and cysteine 202.

The protein belongs to the QueC family. Zn(2+) is required as a cofactor.

It carries out the reaction 7-carboxy-7-deazaguanine + NH4(+) + ATP = 7-cyano-7-deazaguanine + ADP + phosphate + H2O + H(+). The protein operates within purine metabolism; 7-cyano-7-deazaguanine biosynthesis. Functionally, catalyzes the ATP-dependent conversion of 7-carboxy-7-deazaguanine (CDG) to 7-cyano-7-deazaguanine (preQ(0)). This Xylella fastidiosa (strain M12) protein is 7-cyano-7-deazaguanine synthase.